Consider the following 338-residue polypeptide: Anthranilate phosphoribosyltransferase (338 aa).

5-phospho-alpha-D-ribose 1-diphosphate contacts are provided by residues G81, 84–85 (GD), T89, 91–94 (NIST), 109–117 (KHGNRNLSS), and A121. G81 is an anthranilate binding site. S93 contacts Mg(2+). Anthranilate is bound at residue N112. R167 contacts anthranilate. Mg(2+)-binding residues include D226 and E227.

The protein belongs to the anthranilate phosphoribosyltransferase family. As to quaternary structure, homodimer. It depends on Mg(2+) as a cofactor.

The enzyme catalyses N-(5-phospho-beta-D-ribosyl)anthranilate + diphosphate = 5-phospho-alpha-D-ribose 1-diphosphate + anthranilate. It functions in the pathway amino-acid biosynthesis; L-tryptophan biosynthesis; L-tryptophan from chorismate: step 2/5. Functionally, catalyzes the transfer of the phosphoribosyl group of 5-phosphorylribose-1-pyrophosphate (PRPP) to anthranilate to yield N-(5'-phosphoribosyl)-anthranilate (PRA). This chain is Anthranilate phosphoribosyltransferase, found in Cereibacter sphaeroides (strain KD131 / KCTC 12085) (Rhodobacter sphaeroides).